The sequence spans 223 residues: UPF0441 protein YgiB (223 aa).

A disordered region spans residues 201 to 223 (ESVAKQSAMQRSAAGTSTRSMGG). Residues 204–223 (AKQSAMQRSAAGTSTRSMGG) show a composition bias toward polar residues.

This sequence belongs to the UPF0441 family.

The sequence is that of UPF0441 protein YgiB from Salmonella arizonae (strain ATCC BAA-731 / CDC346-86 / RSK2980).